A 1485-amino-acid chain; its full sequence is Chromosome partition protein MukB (1485 aa).

34–41 is a binding site for ATP; the sequence is GGNGAGKS. Coiled coils occupy residues 311-480 and 519-665; these read EMAR…EAYR and GARL…RLSQ. The interval 666–783 is flexible hinge; the sequence is PGGAEDARLI…SLPLFGRAAR (118 aa). Coiled coils occupy residues 832 to 1115 and 1209 to 1265; these read NDPE…QAKA and IDAI…LQSV.

The protein belongs to the SMC family. MukB subfamily. As to quaternary structure, homodimerization via its hinge domain. Binds to DNA via its C-terminal region. Interacts, and probably forms a ternary complex, with MukE and MukF via its C-terminal region. The complex formation is stimulated by calcium or magnesium. Interacts with tubulin-related protein FtsZ.

It localises to the cytoplasm. The protein resides in the nucleoid. Functionally, plays a central role in chromosome condensation, segregation and cell cycle progression. Functions as a homodimer, which is essential for chromosome partition. Involved in negative DNA supercoiling in vivo, and by this means organize and compact chromosomes. May achieve or facilitate chromosome segregation by condensation DNA from both sides of a centrally located replisome during cell division. This chain is Chromosome partition protein MukB, found in Edwardsiella ictaluri (strain 93-146).